The chain runs to 450 residues: Probable 1,4-beta-D-glucan cellobiohydrolase C (450 aa).

The N-terminal stretch at 1–19 (MKHLASSIALTLLLPAVQA) is a signal peptide. A CBM1 domain is found at 20-55 (QQTVWGQCGGQGWSGPTNCVAGAACSTLNPYYAQCI). Cystine bridges form between Cys-27–Cys-44 and Cys-38–Cys-54. Positions 59–90 (TATSTTLSTTTTTQTTTKPTTTGPTTSAPTVT) are thr-rich linker. Residues 63–89 (TTLSTTTTTQTTTKPTTTGPTTSAPTV) are disordered. Residues 91 to 450 (ASGNPFSGYQ…QLLTNANPSF (360 aa)) are catalytic. Asp-180 is an active-site residue. 2 disulfide bridges follow: Cys-181–Cys-240 and Cys-372–Cys-419. Catalysis depends on Asp-226, which acts as the Proton donor. Asp-405 acts as the Nucleophile in catalysis. Asn-409 carries N-linked (GlcNAc...) asparagine glycosylation.

The protein belongs to the glycosyl hydrolase 6 (cellulase B) family.

The protein localises to the secreted. The enzyme catalyses Hydrolysis of (1-&gt;4)-beta-D-glucosidic linkages in cellulose and cellotetraose, releasing cellobiose from the non-reducing ends of the chains.. The biological conversion of cellulose to glucose generally requires three types of hydrolytic enzymes: (1) Endoglucanases which cut internal beta-1,4-glucosidic bonds; (2) Exocellobiohydrolases that cut the disaccharide cellobiose from the non-reducing end of the cellulose polymer chain; (3) Beta-1,4-glucosidases which hydrolyze the cellobiose and other short cello-oligosaccharides to glucose. This Neosartorya fischeri (strain ATCC 1020 / DSM 3700 / CBS 544.65 / FGSC A1164 / JCM 1740 / NRRL 181 / WB 181) (Aspergillus fischerianus) protein is Probable 1,4-beta-D-glucan cellobiohydrolase C (cbhC).